The primary structure comprises 2669 residues: Nucleosome-remodeling factor subunit NURF301 (2669 aa).

The segment covering 1–12 (MSGRGSRKRGRP) has biased composition (basic residues). Residues 1–121 (MSGRGSRKRG…EEDKSDNEDD (121 aa)) form a required for function in nucleosome sliding region. The segment at 1–125 (MSGRGSRKRG…SDNEDDMLLT (125 aa)) is disordered. Positions 6–18 (SRKRGRPPKTPNE) form a DNA-binding region, a.T hook. Residues 38–56 (GKSQPSTPSASRGISPQSD) are compositionally biased toward polar residues. Ser-40, Ser-52, Ser-55, Ser-59, and Ser-62 each carry phosphoserine. The span at 66 to 82 (HTNRSRGSAAKRGRGRK) shows a compositional bias: basic residues. Residues 109-125 (GDSEEDKSDNEDDMLLT) show a composition bias toward acidic residues. The 61-residue stretch at 188 to 248 (NTHVLRALSI…LKAILREEDA (61 aa)) folds into the DDT domain. The PHD-type 1 zinc finger occupies 339–386 (DDHCRVCHRLGDLLCCETCPAVYHLECVDPPMNDVPTEDWQCGLCRSH). A coiled-coil region spans residues 460 to 515 (RLHSQITERRDEIERQMKLTETLTNEHKHTKRSVIEIEQEAKNELLEKEVLDEDEK). The tract at residues 505-538 (LEKEVLDEDEKDGDAKSESQSIEGTKKQEECKMV) is disordered. The span at 528–537 (GTKKQEECKM) shows a compositional bias: basic and acidic residues. Positions 688–720 (LQRITSAEREERKKLEKREKRERDDEEERNRLA) form a coiled coil. Disordered stretches follow at residues 1026–1048 (EGKRESTQVAVDDSEEGKPAESE), 1135–1159 (TGLNSGNAEDVDMTPGWRRKRNQKS), and 1406–1425 (RSGLRKRKRAESPQPTEPQI). Ser-1417 bears the Phosphoserine mark. A Phosphothreonine modification is found at Thr-1527. The span at 1559 to 1590 (SRTGGANTAAAAASPTVGGSTSTQSNPSTSTP) shows a compositional bias: low complexity. Disordered stretches follow at residues 1559–1596 (SRTGGANTAAAAASPTVGGSTSTQSNPSTSTPHKVQII), 2181–2203 (INNGDDQENSKCAETENSNITTN), and 2283–2307 (TNEWETCSRGSVNEEALTPSRQTDD). The span at 2283–2293 (TNEWETCSRGS) shows a compositional bias: polar residues. The stretch at 2338-2373 (KNDEVAELGEQKQSQLERHKELLKKNILRKRSLLER) forms a coiled coil. The disordered stretch occupies residues 2382–2432 (DVKTKVQRHVRPLSNASPDEQSENERSGEPNLDFKRTEVQNPRHGAGRPKK). Phosphoserine is present on residues Ser-2395, Ser-2398, and Ser-2403. Residues 2404–2419 (ENERSGEPNLDFKRTE) show a composition bias toward basic and acidic residues. Residues 2481–2546 (EFICIDCKRA…EYVCPECQRK (66 aa)) form a PHD-type 2 zinc finger. The region spanning 2556-2660 (KLTSNDVEEL…SYFVQKIKNF (105 aa)) is the Bromo domain.

It belongs to the BPTF family. Component of the NURF complex composed of Caf1-55, E(bx), Nurf-38 and Iswi. Interacts with Trl. Interacts with histone H3-K4Me3.

It localises to the nucleus. Its function is as follows. Histone-binding component of NURF (nucleosome remodeling factor), a complex which catalyzes ATP-dependent nucleosome sliding and facilitates transcription of chromatin. Specifically recognizes H3 tails trimethylated on 'Lys-4' (H3K4me3), which mark transcription start sites of virtually all active genes. Required for homeotic gene expression, proper larval blood cell development, normal male X chromosome morphology, ecdysteroid signaling and metamorphosis. The sequence is that of Nucleosome-remodeling factor subunit NURF301 (E(bx)) from Drosophila melanogaster (Fruit fly).